Reading from the N-terminus, the 158-residue chain is 14-3-3 protein gamma (158 aa).

Positions 1–158 are interaction with SPATA18/MIEAP; the sequence is AAAMKNVTEL…TSDQQDDDGG (158 aa). At Ser-48 the chain carries Phosphoserine. A Phosphotyrosine modification is found at Tyr-60. Thr-72 is modified (phosphothreonine). Ser-130 is modified (phosphoserine). The residue at position 149 (Thr-149) is a Phosphothreonine. Ser-150 carries the post-translational modification Phosphoserine.

The protein belongs to the 14-3-3 family. As to quaternary structure, homodimer. Part of a complex that contains DSG3, PKP1, YAP1 and YWHAG; the complex is required for localization of DSG3 and YAP1 to the cell membrane in keratinocytes. Interacts with SAMSN1. Interacts with RAF1, SSH1 and CRTC2/TORC2. Interacts with ABL1 (phosphorylated form); the interaction retains it in the cytoplasm. Interacts with GAB2. Interacts with MDM4 (phosphorylated); negatively regulates MDM4 activity toward TP53. Interacts with PKA-phosphorylated AANAT and SIRT2. Interacts with the 'Thr-369' phosphorylated form of DAPK2. Interacts with PI4KB, TBC1D22A and TBC1D22B. Interacts with SLITRK1. Interacts with LRRK2; this interaction is dependent on LRRK2 phosphorylation. Interacts with MARK2 and MARK3. Interacts with MEFV. Interacts with ENDOG, TSC2 and PIK3C3; interaction with ENDOG weakens its interaction with TSC2 and PIK3C3. Interacts with (phosphorylated) WDR24. Interacts with BEST1; this interaction promotes L-glutamate channel activity leading to the positive regulation of NMDA glutamate receptor activity through the L-glutamate secretion. Interacts with PKP1 (when phosphorylated); the interaction results in translocation of PKP1 to the cytoplasm and loss of intercellular adhesion in keratinocytes. Interacts with SPATA18/MIEAP; a protein that also plays a role in MALM. In terms of processing, phosphorylated by various PKC isozymes.

It is found in the cytoplasm. The protein localises to the cytosol. It localises to the mitochondrion matrix. Its function is as follows. Adapter protein implicated in the regulation of a large spectrum of both general and specialized signaling pathways. Binds to a large number of partners, usually by recognition of a phosphoserine or phosphothreonine motif. Binding generally results in the modulation of the activity of the binding partner. Promotes inactivation of WDR24 component of the GATOR2 complex by binding to phosphorylated WDR24. Participates in the positive regulation of NMDA glutamate receptor activity by promoting the L-glutamate secretion through interaction with BEST1. Reduces keratinocyte intercellular adhesion, via interacting with PKP1 and sequestering it in the cytoplasm, thereby reducing its incorporation into desmosomes. Plays a role in mitochondrial protein catabolic process (also named MALM) that promotes the degradation of damaged proteins inside mitochondria. This chain is 14-3-3 protein gamma, found in Ovis aries (Sheep).